The primary structure comprises 77 residues: Homeodomain-only protein (77 aa).

A DNA-binding region (homeobox; degenerate) is located at residues 7–65 (AALGVRLTEDQVKVLEENFTKVSKHPDETTLMLIAAECGLSEEQTAVWFRMRNAQWRKA).

It localises to the nucleus. Its subcellular location is the cytoplasm. Atypical homeodomain protein which does not bind DNA and is required to modulate cardiac growth and development. May act via an interaction with SRF, leading to modulate the expression of SRF-dependent cardiac-specific genes and cardiac development. May act as a co-chaperone for HSPA1A and HSPA1B chaperone proteins and assist in chaperone-mediated protein refolding. This Danio rerio (Zebrafish) protein is Homeodomain-only protein (hopx).